A 96-amino-acid chain; its full sequence is (4S)-4-hydroxy-5-phosphonooxypentane-2,3-dione isomerase (96 aa).

In terms of domain architecture, ABM spans 2-91 (HVTLVEINVH…MTGPRTKKVF (90 aa)).

The protein belongs to the LsrG family. Homodimer.

It is found in the cytoplasm. It catalyses the reaction (2S)-2-hydroxy-3,4-dioxopentyl phosphate = 3-hydroxy-2,4-dioxopentyl phosphate. Involved in the degradation of phospho-AI-2, thereby terminating induction of the lsr operon and closing the AI-2 signaling cycle. Catalyzes the conversion of (4S)-4-hydroxy-5-phosphonooxypentane-2,3-dione (P-DPD) to 3-hydroxy-5-phosphonooxypentane-2,4-dione (P-HPD). The sequence is that of (4S)-4-hydroxy-5-phosphonooxypentane-2,3-dione isomerase from Salmonella choleraesuis (strain SC-B67).